Reading from the N-terminus, the 249-residue chain is MWVGVISLFPEMFRSVTDFGVTSQAIKKGLLSIETWNPRDFTHDKHRTVDDRPYGGGPGMLMMVQPLRDAITAAREASPGKTKVIYLSPQGRTLNQAGVEELATNENLILICGRYEGVDERIIQSEVDEEWSIGDFVLTGGELPAMTLIDSVSRFVPGVLGDFASAEEDSFADGLLDCPHYTRPEVLDGKEVPSVLKSGNHKDIARWRMKQSLGRTWLRRPELLGNLALTDEQELLLAEFVREERQNSK.

S-adenosyl-L-methionine contacts are provided by residues Gly113 and 133-138; that span reads IGDFVL.

Belongs to the RNA methyltransferase TrmD family. In terms of assembly, homodimer.

The protein resides in the cytoplasm. The catalysed reaction is guanosine(37) in tRNA + S-adenosyl-L-methionine = N(1)-methylguanosine(37) in tRNA + S-adenosyl-L-homocysteine + H(+). Specifically methylates guanosine-37 in various tRNAs. The chain is tRNA (guanine-N(1)-)-methyltransferase from Aliivibrio fischeri (strain ATCC 700601 / ES114) (Vibrio fischeri).